The sequence spans 110 residues: MPFFSSCLCPSHYSGPSLPSSTSSSLPTGPENQLGFVLLQAMVHHANSSCVRNAFWLQITEKLTPALSIIISVVYLRCPEMVENRIGFLLNVKDSKTLSVVGPHPKPCIL.

In terms of tissue distribution, expressed predominantly in brain and weakly in heart and lung. Expression is reduced or undetectable in cultured glioma cells, primary glioblastoma cells and malignant glioblastoma tumors.

Its function is as follows. May serve as a molecular marker for or play a role in the malignant progression of glioblastomas. The protein is Putative protein RIG (RIG) of Homo sapiens (Human).